Consider the following 173-residue polypeptide: Large ribosomal subunit protein uL16 (173 aa).

The protein belongs to the universal ribosomal protein uL16 family.

In Methanococcus maripaludis (strain DSM 14266 / JCM 13030 / NBRC 101832 / S2 / LL), this protein is Large ribosomal subunit protein uL16.